A 324-amino-acid chain; its full sequence is Phospho-N-acetylmuramoyl-pentapeptide-transferase (324 aa).

10 consecutive transmembrane segments (helical) span residues 5–25 (IIVI…PLFI), 52–72 (PTMG…WVTA), 76–96 (VLSA…VLGF), 117–137 (FIGQ…SGFS), 147–167 (WSFD…VGGS), 176–196 (LDGL…VLAW), 203–223 (VAVF…FNAH), 227–247 (VFMG…VAVL), 250–270 (LELL…SVII), and 302–322 (IVVT…YIEV).

Belongs to the glycosyltransferase 4 family. MraY subfamily. The cofactor is Mg(2+).

Its subcellular location is the cell membrane. The catalysed reaction is UDP-N-acetyl-alpha-D-muramoyl-L-alanyl-gamma-D-glutamyl-meso-2,6-diaminopimeloyl-D-alanyl-D-alanine + di-trans,octa-cis-undecaprenyl phosphate = di-trans,octa-cis-undecaprenyl diphospho-N-acetyl-alpha-D-muramoyl-L-alanyl-D-glutamyl-meso-2,6-diaminopimeloyl-D-alanyl-D-alanine + UMP. It functions in the pathway cell wall biogenesis; peptidoglycan biosynthesis. Functionally, catalyzes the initial step of the lipid cycle reactions in the biosynthesis of the cell wall peptidoglycan: transfers peptidoglycan precursor phospho-MurNAc-pentapeptide from UDP-MurNAc-pentapeptide onto the lipid carrier undecaprenyl phosphate, yielding undecaprenyl-pyrophosphoryl-MurNAc-pentapeptide, known as lipid I. This Geobacillus thermodenitrificans (strain NG80-2) protein is Phospho-N-acetylmuramoyl-pentapeptide-transferase.